A 332-amino-acid chain; its full sequence is RNA polymerase sigma-B factor (332 aa).

Positions Asp-125–Val-138 match the Polymerase core binding motif. The H-T-H motif DNA-binding region spans Leu-294 to Lys-313.

The protein belongs to the sigma-70 factor family.

In terms of biological role, sigma factors are initiation factors that promote the attachment of RNA polymerase to specific initiation sites and are then released. The protein is RNA polymerase sigma-B factor (sigB) of Nostoc sp. (strain PCC 7120 / SAG 25.82 / UTEX 2576).